The primary structure comprises 323 residues: tRNA U34 carboxymethyltransferase (323 aa).

Carboxy-S-adenosyl-L-methionine is bound by residues Lys91, Trp105, Lys110, Gly130, 152-154 (DPT), 181-182 (IE), Met196, Tyr200, and Arg315.

The protein belongs to the class I-like SAM-binding methyltransferase superfamily. CmoB family. In terms of assembly, homotetramer.

The enzyme catalyses carboxy-S-adenosyl-L-methionine + 5-hydroxyuridine(34) in tRNA = 5-carboxymethoxyuridine(34) in tRNA + S-adenosyl-L-homocysteine + H(+). Functionally, catalyzes carboxymethyl transfer from carboxy-S-adenosyl-L-methionine (Cx-SAM) to 5-hydroxyuridine (ho5U) to form 5-carboxymethoxyuridine (cmo5U) at position 34 in tRNAs. The chain is tRNA U34 carboxymethyltransferase from Salmonella arizonae (strain ATCC BAA-731 / CDC346-86 / RSK2980).